Reading from the N-terminus, the 77-residue chain is MTKLTVLLLAILVLLPLATSNSAADEALASLSGLLRRAKRCVPQNSCTSNADCCGSYTCSCVSQPSCKGMNPRRRCM.

A signal peptide spans 1–21 (MTKLTVLLLAILVLLPLATSN). Residues 22 to 40 (SAADEALASLSGLLRRAKR) constitute a propeptide that is removed on maturation.

Post-translationally, contains 4 disulfide bonds. Expressed by the venom duct.

The protein localises to the secreted. This chain is Teretoxin Tsu15.4, found in Terebra subulata (Chocolate spotted auger).